The following is a 502-amino-acid chain: Aspartyl/glutamyl-tRNA(Asn/Gln) amidotransferase subunit B (502 aa).

This sequence belongs to the GatB/GatE family. GatB subfamily. Heterotrimer of A, B and C subunits.

It carries out the reaction L-glutamyl-tRNA(Gln) + L-glutamine + ATP + H2O = L-glutaminyl-tRNA(Gln) + L-glutamate + ADP + phosphate + H(+). It catalyses the reaction L-aspartyl-tRNA(Asn) + L-glutamine + ATP + H2O = L-asparaginyl-tRNA(Asn) + L-glutamate + ADP + phosphate + 2 H(+). Its function is as follows. Allows the formation of correctly charged Asn-tRNA(Asn) or Gln-tRNA(Gln) through the transamidation of misacylated Asp-tRNA(Asn) or Glu-tRNA(Gln) in organisms which lack either or both of asparaginyl-tRNA or glutaminyl-tRNA synthetases. The reaction takes place in the presence of glutamine and ATP through an activated phospho-Asp-tRNA(Asn) or phospho-Glu-tRNA(Gln). The sequence is that of Aspartyl/glutamyl-tRNA(Asn/Gln) amidotransferase subunit B from Pseudarthrobacter chlorophenolicus (strain ATCC 700700 / DSM 12829 / CIP 107037 / JCM 12360 / KCTC 9906 / NCIMB 13794 / A6) (Arthrobacter chlorophenolicus).